We begin with the raw amino-acid sequence, 1034 residues long: Sodium bicarbonate cotransporter 3 (1034 aa).

Disordered regions lie at residues 1 to 31 and 53 to 99; these read MEAD…KTSS and HVPF…SQRV. The Extracellular segment spans residues 1–476; it reads MEADGAGEQM…DFKDALSLQC (476 aa). A phosphoserine mark is found at serine 57, serine 60, serine 89, and serine 155. Basic residues predominate over residues 60–77; that stretch reads SRRRHKHRGHKHHHRRRK. Residues 78–90 are compositionally biased toward basic and acidic residues; that stretch reads DKDSDKEDGRESP. N-linked (GlcNAc...) asparagine glycosylation occurs at asparagine 176. Serine 238, serine 250, serine 260, methionine 263, serine 268, and serine 271 each carry phosphoserine. Positions 250 to 260 are enriched in polar residues; that stretch reads SAPGNLDNSKS. A disordered region spans residues 250–276; it reads SAPGNLDNSKSGEMKGNGSGGSRENST. Asparagine 274 carries an N-linked (GlcNAc...) asparagine glycan. Phosphoserine is present on residues serine 275 and serine 424. The helical transmembrane segment at 477–497 threads the bilayer; that stretch reads LASILFLYCACMSPVITFGGL. Topologically, residues 498–505 are cytoplasmic; it reads LGEATEGR. The chain crosses the membrane as a helical span at residues 506 to 526; that stretch reads ISAIESLFGASLTGIAYSLFA. Topologically, residues 527-563 are extracellular; it reads GQPLTILGSTGPVLVFEKILFKFCRDYHLSYLSLRTS. Residues 564–584 traverse the membrane as a helical segment; that stretch reads IGLWTSFLCIVLVATDASSLV. Residues 585 to 593 are Cytoplasmic-facing; it reads CYITRFTEE. Residues 594 to 614 form a helical membrane-spanning segment; the sequence is AFAALICIIFIYEALEKLFHL. Residues 615–685 are Extracellular-facing; that stretch reads GEIYAFNMHN…MFVGSACGPH (71 aa). Cysteine 634 and cysteine 636 form a disulfide bridge. Residues asparagine 644, asparagine 654, and asparagine 664 are each glycosylated (N-linked (GlcNAc...) asparagine). Cysteine 670 and cysteine 682 are disulfide-bonded. The chain crosses the membrane as a helical span at residues 686-706; sequence GPYVPDVLFWCVVLFFTTFFL. At 707–729 the chain is on the cytoplasmic side; that stretch reads SSFLKQFKTKGYFPTKVRSTISD. The helical transmembrane segment at 730–750 threads the bilayer; sequence FAVFLTIVIMVAIDYLVGIPS. Over 751–776 the chain is Extracellular; that stretch reads PKLHVPEKFEPTDPSRGWIISPLGDN. The chain crosses the membrane as a helical span at residues 777–797; that stretch reads PWWTLLIAAVPALLCTILIFM. Residues 798 to 812 lie on the Cytoplasmic side of the membrane; sequence DQQITAVIINRKEHK. A helical transmembrane segment spans residues 813 to 833; the sequence is LKFIPMPVLYGVFLYMGVSSL. The interval 815-915 is essential for cell membrane localization and transport activity; sequence FIPMPVLYGV…MDLCFTKREL (101 aa). The Extracellular portion of the chain corresponds to 834 to 876; the sequence is KGIQFFDRIKLFGMPAKHQPDLIYLRYVPLWKVHVFTVVQLTC. The helical transmembrane segment at 877–897 threads the bilayer; the sequence is LVLLWVIKASAAAVVFPMMVL. The Cytoplasmic portion of the chain corresponds to 898–1034; sequence ALVFVRKLMD…KKYMDAETSL (137 aa). The interval 918–920 is CA2-binding; the sequence is LDD. Residues 926–946 form a disordered region; it reads KKKKEDDKKKKEKEEAERMLQ. The residue at position 951 (threonine 951) is a Phosphothreonine. A phosphoserine mark is found at serine 960 and serine 1033. The PDZ-binding signature appears at 1031–1034; sequence ETSL.

This sequence belongs to the anion exchanger (TC 2.A.31) family. As to quaternary structure, forms a complex with ATP6V1B1 and NHERF1/EBP50. Interacts in a pH dependent-manner with CA2/carbonic anhydrase 2. Interacts with CFTR through NHERF1/EBP50. Interacts with USH1C. As to expression, expressed in the spiral ligament throughout the cochlea and in photoreceptors of the outer plexiform layer of the retina (at protein level).

It localises to the basolateral cell membrane. The protein localises to the apical cell membrane. The protein resides in the cell projection. Its subcellular location is the stereocilium. It is found in the cell membrane. The catalysed reaction is hydrogencarbonate(in) + Na(+)(in) = hydrogencarbonate(out) + Na(+)(out). Its activity is regulated as follows. Activity is inhibited by 4,4'-di-isothiocyanatostilbene-2,2'-disulfonic acid (DIDS - an inhibitor of several anion channels and transporters). Functionally, electroneutral sodium- and bicarbonate-dependent cotransporter with a Na(+):HCO3(-) 1:1 stoichiometry. Mediates the sodium-dependent bicarbonate transport important for pH recovery after acid load as well as for regulation of steady-state pH in the duodenum and vascular smooth muscle cells. Plays a key role in macrophage acidification, mediating bicarbonate import into the cytoplasm which is crucial for net acid extrusion and maintenance of cytoplasmic pH during phagocytosis. Provides cellular bicarbonate for de novo purine and pyrimidine synthesis and is a key mediator of de novo nucleotide synthesis downstream of mTORC1 signaling in proliferating cells. May be involved in maintaining locomotor activity, exploratory behavior, and hearing. The sequence is that of Sodium bicarbonate cotransporter 3 (Slc4a7) from Mus musculus (Mouse).